Consider the following 360-residue polypeptide: Nicotinate-nucleotide--dimethylbenzimidazole phosphoribosyltransferase (360 aa).

Glu327 acts as the Proton acceptor in catalysis.

This sequence belongs to the CobT family.

It catalyses the reaction 5,6-dimethylbenzimidazole + nicotinate beta-D-ribonucleotide = alpha-ribazole 5'-phosphate + nicotinate + H(+). It functions in the pathway nucleoside biosynthesis; alpha-ribazole biosynthesis; alpha-ribazole from 5,6-dimethylbenzimidazole: step 1/2. Catalyzes the synthesis of alpha-ribazole-5'-phosphate from nicotinate mononucleotide (NAMN) and 5,6-dimethylbenzimidazole (DMB). In Shewanella baltica (strain OS185), this protein is Nicotinate-nucleotide--dimethylbenzimidazole phosphoribosyltransferase.